Reading from the N-terminus, the 624-residue chain is (-)-beta-phellandrene synthase 1, chloroplastic (624 aa).

A chloroplast-targeting transit peptide spans 1–48 (MAIVSSVPLASKSCLHKSLISSIHKLKPFCRTIPTLGMSRPGKYVMPS). Asp-375, Asp-379, and Asp-527 together coordinate Mg(2+). Residues 375 to 379 (DDMYD) carry the DDXXD motif motif.

The protein belongs to the terpene synthase family. Tpsd subfamily. The cofactor is Mg(2+). Requires Mn(2+) as cofactor.

Its subcellular location is the plastid. The protein localises to the chloroplast. It catalyses the reaction (2E)-geranyl diphosphate = (-)-beta-phellandrene + diphosphate. It functions in the pathway terpene metabolism; oleoresin biosynthesis. Its function is as follows. Terpene synthase (TPS) involved in the biosynthesis of monoterpene natural products included in conifer oleoresin secretions and volatile emissions; these compounds contribute to biotic and abiotic stress defense against herbivores and pathogens. Catalyzes the conversion of (2E)-geranyl diphosphate (GPP) to (-)-beta-phellandrene. The protein is (-)-beta-phellandrene synthase 1, chloroplastic of Picea sitchensis (Sitka spruce).